The primary structure comprises 269 residues: Monofunctional glycosyltransferase (269 aa).

The chain crosses the membrane as a helical span at residues 46-66; sequence AIITILILLIIFFGVMYFISS.

Belongs to the glycosyltransferase 51 family.

The protein localises to the cell membrane. It catalyses the reaction [GlcNAc-(1-&gt;4)-Mur2Ac(oyl-L-Ala-gamma-D-Glu-L-Lys-D-Ala-D-Ala)](n)-di-trans,octa-cis-undecaprenyl diphosphate + beta-D-GlcNAc-(1-&gt;4)-Mur2Ac(oyl-L-Ala-gamma-D-Glu-L-Lys-D-Ala-D-Ala)-di-trans,octa-cis-undecaprenyl diphosphate = [GlcNAc-(1-&gt;4)-Mur2Ac(oyl-L-Ala-gamma-D-Glu-L-Lys-D-Ala-D-Ala)](n+1)-di-trans,octa-cis-undecaprenyl diphosphate + di-trans,octa-cis-undecaprenyl diphosphate + H(+). The protein operates within cell wall biogenesis; peptidoglycan biosynthesis. Its function is as follows. Peptidoglycan polymerase that catalyzes glycan chain elongation using lipid-linked disaccharide-pentapeptide as the substrate. The protein is Monofunctional glycosyltransferase of Staphylococcus epidermidis (strain ATCC 35984 / DSM 28319 / BCRC 17069 / CCUG 31568 / BM 3577 / RP62A).